The following is a 455-amino-acid chain: UDP-glycosyltransferase 2 (455 aa).

It belongs to the UDP-glycosyltransferase family.

The enzyme catalyses exophillate + UDP-alpha-D-galactose = phaeomoniecin D + UDP + H(+). It participates in secondary metabolite biosynthesis. Functionally, catalyzes the second glycosylation step during phaeomoniecin D biosynthesis, the further O-galactosylation of exophillic acid (produced by the O-glycosyltransferase OGT1) to yield the 4-O-beta-D-galactoside phaeomoniecin D. The polypeptide is UDP-glycosyltransferase 2 (Phaeomoniella chlamydospora (Phaeoacremonium chlamydosporum)).